Consider the following 408-residue polypeptide: DNA replication and repair protein RecF (408 aa).

Residue 30–37 (GSNGQGKT) participates in ATP binding. Disordered stretches follow at residues 220–252 (DHGPSARPELSILADDPGEDDVADETGARDGGR) and 389–408 (SPTPASASEPASPGEDGGAA). Over residues 389-402 (SPTPASASEPASPG) the composition is skewed to low complexity.

This sequence belongs to the RecF family.

Its subcellular location is the cytoplasm. Functionally, the RecF protein is involved in DNA metabolism; it is required for DNA replication and normal SOS inducibility. RecF binds preferentially to single-stranded, linear DNA. It also seems to bind ATP. This is DNA replication and repair protein RecF from Clavibacter sepedonicus (Clavibacter michiganensis subsp. sepedonicus).